A 332-amino-acid chain; its full sequence is 5-dehydro-2-deoxygluconokinase (332 aa).

It belongs to the carbohydrate kinase PfkB family.

It carries out the reaction 5-dehydro-2-deoxy-D-gluconate + ATP = 6-phospho-5-dehydro-2-deoxy-D-gluconate + ADP + H(+). Its pathway is polyol metabolism; myo-inositol degradation into acetyl-CoA; acetyl-CoA from myo-inositol: step 5/7. Functionally, catalyzes the phosphorylation of 5-dehydro-2-deoxy-D-gluconate (2-deoxy-5-keto-D-gluconate or DKG) to 6-phospho-5-dehydro-2-deoxy-D-gluconate (DKGP). The chain is 5-dehydro-2-deoxygluconokinase from Bacillus thuringiensis subsp. konkukian (strain 97-27).